We begin with the raw amino-acid sequence, 248 residues long: tRNA (guanine-N(1)-)-methyltransferase (248 aa).

S-adenosyl-L-methionine contacts are provided by residues G113 and 133-138; that span reads VGDYVL.

It belongs to the RNA methyltransferase TrmD family. Homodimer.

Its subcellular location is the cytoplasm. The catalysed reaction is guanosine(37) in tRNA + S-adenosyl-L-methionine = N(1)-methylguanosine(37) in tRNA + S-adenosyl-L-homocysteine + H(+). In terms of biological role, specifically methylates guanosine-37 in various tRNAs. The polypeptide is tRNA (guanine-N(1)-)-methyltransferase (Shewanella sp. (strain W3-18-1)).